The primary structure comprises 850 residues: MPAGLTEPAGAAAPVVSSASGAVTMAPVAALPVRVEGTPVALGPVTKAPVSVCVESVAPQPLPAPVGTLVTKVVPVTALPKLGSPRLPAPQIVTVKTPGTTTIQLPANLQLPPGTVLIKSNSGQLMLVSPQQAVTGAKTTSNITPRPAVPANTQTVKICTVPNSSSQLMKKVTVAPVKNLTQIGTTVATTASSTSSGQPVALPSSVITVTPAKLVNTVSTLKSSSLGVLSTPSNDARLKAETSVAAQTALPPTVLENVKKCKNFLSMLIKLACSGSQSPEMGQNVKRLVEQLLDAEIEAEEFTRKLYIELKSAPQPHLVPFLKKSVVALRQLLPNSQSFIENCVKEVSGDVVISSCTMTTATSPVVTSTVSPVLVSGATAPRTLSVQQTLNPLAGPGVANTGVVTLHSVAPAAATGGTTAATVLLQTSKPLTTSVPNTVAAVSLQPENPVVSGAAVTLAIPSATFGEASATPLCLPSAKPAITSAGTKADKPAIGTPVQIVTQPSTLLPQAAGIPQTAKVKQLVVQQPSGSSVNHVTSISHSSPLSTQNCGQKTPVNAVMPTSSIIKQITLPGNKLLSLQAQRSSIQSNKIKENGPTCFRGEDDINDVTFMAEVNLDEENACILAAHSDFVGTLIQSCKEEPFLVIGALQKRILDIGKKHDITELNSDAVNLISHATQERLRGLLEKLTTIAQHRMTIYKGSENYILSTDTRSQLKFLEKLDQLEKQRKDLEEREMLLKAAKSRSNKEDPEQLRLKQKAKELQQLELAQIQYRDANLTALAAIGPRKKRPLESGNESFKDNPSTSGTSSLTATKPFRPRITRICLRDLIFCMEQEREMKYSRALYLALLK.

The sufficient for interaction with ZNF628 stretch occupies residues 99–240; that stretch reads GTTTIQLPAN…TPSNDARLKA (142 aa). The 98-residue stretch at 256 to 353 folds into the TAFH domain; it reads ENVKKCKNFL…VKEVSGDVVI (98 aa). The tract at residues 504-526 is required for interaction with P65/RELA; the sequence is PSTLLPQAAGIPQTAKVKQLVVQ. Residues 509 to 549 carry the Nuclear export signal motif; the sequence is PQAAGIPQTAKVKQLVVQQPSGSSVNHVTSISHSSPLSTQN. S584 carries the post-translational modification Phosphoserine. Residues 642-691 form the Histone-fold domain; sequence PFLVIGALQKRILDIGKKHDITELNSDAVNLISHATQERLRGLLEKLTTI. The interval 788 to 812 is disordered; that stretch reads KRPLESGNESFKDNPSTSGTSSLTA. Residues 794–812 show a composition bias toward polar residues; the sequence is GNESFKDNPSTSGTSSLTA. Positions 818–850 are required for interaction with TAF12; it reads PRITRICLRDLIFCMEQEREMKYSRALYLALLK.

The protein belongs to the TAF4 family. As to quaternary structure, TFIID is composed of TATA binding protein (TBP) and a number of TBP-associated factors (TAFs). Heterodimerizes with TAF12/TFII20 via the C-terminal H2A-like histone-fold domain. This heterodimer forms a histone-like octamer with the TAF6/TAFII70-TAF9/TAFII31 heterodimer. Interacts with P65/RELA homodimers and P65/RELA-REL heterodimers. Interaction with POU2AF1, via its C-terminal activation domain, is required for octamer-dependent transcription. Interacts with ZNF628. In terms of tissue distribution, highly expressed in the testes and ovary, whereas lower levels are detected in most other tissues.

It localises to the nucleus. Its subcellular location is the cytoplasm. In terms of biological role, cell type-specific subunit of the general transcription factor TFIID that may function as a gene-selective coactivator in certain cells. TFIID is a multimeric protein complex that plays a central role in mediating promoter responses to various activators asond repressors. TAF4B is a transcriptional coactivator of the p65/RELA NF-kappa-B subunit. Involved in the activation of a subset of antiapoptotic genes including TNFAIP3. Through interaction with OCBA/POU2AF1, acts as a coactivator of B-cell-specific transcription. Plays a role in spermiogenesis and oogenesis. This chain is Transcription initiation factor TFIID subunit 4B (Taf4b), found in Mus musculus (Mouse).